We begin with the raw amino-acid sequence, 770 residues long: Molybdenum cofactor sulfurase (770 aa).

Lys-243 carries the N6-(pyridoxal phosphate)lysine modification. Cys-405 is an active-site residue. Residues 611-769 (GDEVANWLCQ…LACGDPITVL (159 aa)) form the MOSC domain. The residue at position 726 (Ser-726) is a Phosphoserine.

The protein belongs to the class-V pyridoxal-phosphate-dependent aminotransferase family. MOCOS subfamily. Pyridoxal 5'-phosphate serves as cofactor.

It carries out the reaction Mo-molybdopterin + L-cysteine + AH2 = thio-Mo-molybdopterin + L-alanine + A + H2O. It functions in the pathway cofactor biosynthesis; molybdopterin biosynthesis. Its function is as follows. Sulfurates the molybdenum cofactor. Sulfation of molybdenum is essential for xanthine dehydrogenase (XDH) and aldehyde oxidase (ADO) enzymes in which molybdenum cofactor is liganded by 1 oxygen and 1 sulfur atom in active form. This Drosophila grimshawi (Hawaiian fruit fly) protein is Molybdenum cofactor sulfurase.